A 378-amino-acid polypeptide reads, in one-letter code: Actin-related protein 2/3 complex subunit 1A (378 aa).

WD repeat units lie at residues 8 to 47 (RFAE…HWER), 53 to 92 (KHDQ…WVPT), 97 to 138 (RLNR…WVSK), 143 to 182 (RHES…VDTK), 203 to 242 (LSYS…PLAQ), 257 to 295 (ISEK…KAAS), and 331 to 375 (VHDN…QELG).

Belongs to the WD repeat ARPC1 family. As to quaternary structure, component of the Arp2/3 complex composed of ARP2, ARP3, ARPC1/p41-ARC, ARPC2/p34-ARC, ARPC3/p21-ARC, ARPC4/p20-ARC and ARPC5/p16-ARC. As to expression, expressed at low levels in all tissues with a relatively highest expression in inflorescences.

Its subcellular location is the cytoplasm. It is found in the cytoskeleton. Functionally, functions as a component of the Arp2/3 complex which is involved in regulation of actin polymerization and together with an activating nucleation-promoting factor (NPF) mediates the formation of branched actin networks. Arp2/3 complex plays a critical role in the control of cell morphogenesis via the modulation of cell polarity development. The chain is Actin-related protein 2/3 complex subunit 1A (ARPC1A) from Arabidopsis thaliana (Mouse-ear cress).